The sequence spans 342 residues: Uroporphyrinogen decarboxylase (342 aa).

Substrate-binding positions include 21-25 (RQAGR), aspartate 71, tyrosine 148, serine 203, and histidine 316.

This sequence belongs to the uroporphyrinogen decarboxylase family. As to quaternary structure, homodimer.

Its subcellular location is the cytoplasm. The enzyme catalyses uroporphyrinogen III + 4 H(+) = coproporphyrinogen III + 4 CO2. The protein operates within porphyrin-containing compound metabolism; protoporphyrin-IX biosynthesis; coproporphyrinogen-III from 5-aminolevulinate: step 4/4. In terms of biological role, catalyzes the decarboxylation of four acetate groups of uroporphyrinogen-III to yield coproporphyrinogen-III. The polypeptide is Uroporphyrinogen decarboxylase (Campylobacter curvus (strain 525.92)).